The sequence spans 264 residues: Type III pantothenate kinase 2 (264 aa).

6–13 (DVGNTFTV) serves as a coordination point for ATP. Substrate is bound by residues Y100 and 107-110 (GADR). D109 serves as the catalytic Proton acceptor. D129 contributes to the K(+) binding site. Position 132 (T132) interacts with ATP. Substrate is bound at residue T184.

This sequence belongs to the type III pantothenate kinase family. As to quaternary structure, homodimer. It depends on NH4(+) as a cofactor. K(+) is required as a cofactor.

It is found in the cytoplasm. It carries out the reaction (R)-pantothenate + ATP = (R)-4'-phosphopantothenate + ADP + H(+). It functions in the pathway cofactor biosynthesis; coenzyme A biosynthesis; CoA from (R)-pantothenate: step 1/5. In terms of biological role, catalyzes the phosphorylation of pantothenate (Pan), the first step in CoA biosynthesis. This is Type III pantothenate kinase 2 from Symbiobacterium thermophilum (strain DSM 24528 / JCM 14929 / IAM 14863 / T).